We begin with the raw amino-acid sequence, 1221 residues long: MECALLLACAFPAAGSGPPRGLAGLGRVAKALQLCCLCCASVAAALASDSSSGASGLNDDYVFVTPVEVDSAGSYISHDILHNGRKKRSAQNARSSLHYRFSAFGQELHLELKPSAILSSHFIVQVLGKDGASETQKPEVQQCFYQGFIRNDSSSSVAVSTCAGLSGLIRTRKNEFLISPLPQLLAQEHNYSSPAGHHPHVLYKRTAEEKIQRYRGYPGSGRNYPGYSPSHIPHASQSRETEYHHRRLQKQHFCGRRKKYAPKPPTEDTYLRFDEYGSSGRPRRSAGKSQKGLNVETLVVADKKMVEKHGKGNVTTYILTVMNMVSGLFKDGTIGSDINVVVVSLILLEQEPGGLLINHHADQSLNSFCQWQSALIGKNGKRHDHAILLTGFDICSWKNEPCDTLGFAPISGMCSKYRSCTINEDTGLGLAFTIAHESGHNFGMIHDGEGNPCRKAEGNIMSPTLTGNNGVFSWSSCSRQYLKKFLSTPQAGCLVDEPKQAGQYKYPDKLPGQIYDADTQCKWQFGAKAKLCSLGFVKDICKSLWCHRVGHRCETKFMPAAEGTVCGLSMWCRQGQCVKFGELGPRPIHGQWSAWSKWSECSRTCGGGVKFQERHCNNPKPQYGGLFCPGSSRIYQLCNINPCNENSLDFRAQQCAEYNSKPFRGWFYQWKPYTKVEEEDRCKLYCKAENFEFFFAMSGKVKDGTPCSPNKNDVCIDGVCELVGCDHELGSKAVSDACGVCKGDNSTCKFYKGLYLNQHKANEYYPVVLIPAGARSIEIQELQVSSSYLAVRSLSQKYYLTGGWSIDWPGEFPFAGTTFEYQRSFNRPERLYAPGPTNETLVFEILMQGKNPGIAWKYALPKVMNGTPPATKRPAYTWSIVQSECSVSCGGGYINVKAICLRDQNTQVNSSFCSAKTKPVTEPKICNAFSCPAYWMPGEWSTCSKACAGGQQSRKIQCVQKKPFQKEEAVLHSLCPVSTPTQVQACNSHACPPQWSLGPWSQCSKTCGRGVRKRELLCKGSAAETLPESQCTSLPRPELQEGCVLGRCPKNSRLQWVASSWSECSATCGLGVRKREMKCSEKGFQGKLITFPERRCRNIKKPNLDLEETCNRRACPAHPVYNMVAGWYSLPWQQCTVTCGGGVQTRSVHCVQQGRPSSSCLLHQKPPVLRACNTNFCPAPEKREDPSCVDFFNWCHLVPQHGVCNHKFYGKQCCKSCTRKI.

Residues 1–47 form the signal peptide; sequence MECALLLACAFPAAGSGPPRGLAGLGRVAKALQLCCLCCASVAAALA. Residues 48 to 284 constitute a propeptide that is removed on maturation; sequence SDSSSGASGL…EYGSSGRPRR (237 aa). 2 N-linked (GlcNAc...) asparagine glycosylation sites follow: asparagine 151 and asparagine 190. The short motif at 252-259 is the Cysteine switch element; the sequence is HFCGRRKK. Residue cysteine 254 coordinates Zn(2+). Positions 258–291 are disordered; the sequence is KKYAPKPPTEDTYLRFDEYGSSGRPRRSAGKSQK. Positions 265–275 are enriched in basic and acidic residues; the sequence is PTEDTYLRFDE. Residues 293 to 498 form the Peptidase M12B domain; that stretch reads LNVETLVVAD…PQAGCLVDEP (206 aa). Asparagine 313 carries N-linked (GlcNAc...) asparagine glycosylation. Cystine bridges form between cysteine 369-cysteine 420, cysteine 395-cysteine 402, cysteine 414-cysteine 493, cysteine 453-cysteine 477, cysteine 521-cysteine 546, cysteine 532-cysteine 553, cysteine 541-cysteine 572, cysteine 566-cysteine 577, cysteine 601-cysteine 638, cysteine 605-cysteine 643, and cysteine 616-cysteine 628. Histidine 436 serves as a coordination point for Zn(2+). Residue glutamate 437 is part of the active site. Zn(2+)-binding residues include histidine 440 and histidine 446. In terms of domain architecture, Disintegrin spans 498–577; that stretch reads PKQAGQYKYP…LSMWCRQGQC (80 aa). One can recognise a TSP type-1 1 domain in the interval 589–644; the sequence is HGQWSAWSKWSECSRTCGGGVKFQERHCNNPKPQYGGLFCPGSSRIYQLCNINPCN. N-linked (GlcNAc...) asparagine glycans are attached at residues asparagine 745, asparagine 838, and asparagine 909. Residues 750–876 form a spacer region; the sequence is FYKGLYLNQH…TPPATKRPAY (127 aa). 4 TSP type-1 domains span residues 931 to 990, 991 to 1049, 1052 to 1116, and 1123 to 1178; these read CPAY…NSHA, CPPQ…GRCP, SRLQ…RACP, and MVAG…NFCP. The 38-residue stretch at 1184–1221 folds into the PLAC domain; sequence EDPSCVDFFNWCHLVPQHGVCNHKFYGKQCCKSCTRKI.

Zn(2+) serves as cofactor. Post-translationally, the precursor is cleaved by a furin endopeptidase. Glycosylated. Can be O-fucosylated by POFUT2 on a serine or a threonine residue found within the consensus sequence C1-X(2)-(S/T)-C2-G of the TSP type-1 repeat domains where C1 and C2 are the first and second cysteine residue of the repeat, respectively. Fucosylated repeats can then be further glycosylated by the addition of a beta-1,3-glucose residue by the glucosyltransferase, B3GALTL. Fucosylation mediates the efficient secretion of ADAMTS family members. Can also be C-glycosylated with one or two mannose molecules on tryptophan residues within the consensus sequence W-X-X-W of the TPRs, and N-glycosylated. These other glycosylations can also facilitate secretion. In terms of tissue distribution, expressed in fetal lung, liver, and kidney and in adult brain, prostate, submaxillary gland, and endothelium.

The protein localises to the secreted. It localises to the extracellular space. Its subcellular location is the extracellular matrix. This chain is A disintegrin and metalloproteinase with thrombospondin motifs 18 (ADAMTS18), found in Homo sapiens (Human).